Here is a 92-residue protein sequence, read N- to C-terminus: Small ribosomal subunit protein uS19 (92 aa).

It belongs to the universal ribosomal protein uS19 family.

Protein S19 forms a complex with S13 that binds strongly to the 16S ribosomal RNA. The chain is Small ribosomal subunit protein uS19 from Legionella pneumophila (strain Paris).